The chain runs to 305 residues: Translation initiation factor eIF2B subunit alpha (305 aa).

This sequence belongs to the eIF-2B alpha/beta/delta subunits family. Component of the translation initiation factor 2B (eIF2B) complex which is a heterodecamer of two sets of five different subunits: alpha, beta, gamma, delta and epsilon. Subunits alpha, beta and delta comprise a regulatory subcomplex and subunits epsilon and gamma comprise a catalytic subcomplex. Within the complex, the hexameric regulatory complex resides at the center, with the two heterodimeric catalytic subcomplexes bound on opposite sides.

It localises to the cytoplasm. It is found in the cytosol. Its function is as follows. Acts as a component of the translation initiation factor 2B (eIF2B) complex, which catalyzes the exchange of GDP for GTP on eukaryotic initiation factor 2 (eIF2) gamma subunit. Its guanine nucleotide exchange factor activity is repressed when bound to eIF2 complex phosphorylated on the alpha subunit, thereby limiting the amount of methionyl-initiator methionine tRNA available to the ribosome and consequently global translation is repressed. The polypeptide is Translation initiation factor eIF2B subunit alpha (Caenorhabditis elegans).